We begin with the raw amino-acid sequence, 401 residues long: Bifunctional enzyme IspD/IspF (401 aa).

A 2-C-methyl-D-erythritol 4-phosphate cytidylyltransferase region spans residues M1–I234. The 2-C-methyl-D-erythritol 2,4-cyclodiphosphate synthase stretch occupies residues R235–S401. Residues D241 and H243 each coordinate a divalent metal cation. Residues D241–H243 and H267–S268 each bind 4-CDP-2-C-methyl-D-erythritol 2-phosphate. Position 275 (H275) interacts with a divalent metal cation. 4-CDP-2-C-methyl-D-erythritol 2-phosphate is bound by residues D289–G291, T365–E368, F372, and R375.

This sequence in the N-terminal section; belongs to the IspD/TarI cytidylyltransferase family. IspD subfamily. The protein in the C-terminal section; belongs to the IspF family. It depends on a divalent metal cation as a cofactor.

The catalysed reaction is 2-C-methyl-D-erythritol 4-phosphate + CTP + H(+) = 4-CDP-2-C-methyl-D-erythritol + diphosphate. The enzyme catalyses 4-CDP-2-C-methyl-D-erythritol 2-phosphate = 2-C-methyl-D-erythritol 2,4-cyclic diphosphate + CMP. The protein operates within isoprenoid biosynthesis; isopentenyl diphosphate biosynthesis via DXP pathway; isopentenyl diphosphate from 1-deoxy-D-xylulose 5-phosphate: step 2/6. Its pathway is isoprenoid biosynthesis; isopentenyl diphosphate biosynthesis via DXP pathway; isopentenyl diphosphate from 1-deoxy-D-xylulose 5-phosphate: step 4/6. In terms of biological role, bifunctional enzyme that catalyzes the formation of 4-diphosphocytidyl-2-C-methyl-D-erythritol from CTP and 2-C-methyl-D-erythritol 4-phosphate (MEP) (IspD), and catalyzes the conversion of 4-diphosphocytidyl-2-C-methyl-D-erythritol 2-phosphate (CDP-ME2P) to 2-C-methyl-D-erythritol 2,4-cyclodiphosphate (ME-CPP) with a corresponding release of cytidine 5-monophosphate (CMP) (IspF). The chain is Bifunctional enzyme IspD/IspF from Rhodopseudomonas palustris (strain HaA2).